The following is a 271-amino-acid chain: Glutamate 5-kinase (271 aa).

Lys-14 contributes to the ATP binding site. Substrate-binding residues include Ser-54, Asp-141, and Asn-157. ATP is bound by residues 177-178 (SD) and 219-225 (TGGMSSK).

Belongs to the glutamate 5-kinase family.

The protein localises to the cytoplasm. It carries out the reaction L-glutamate + ATP = L-glutamyl 5-phosphate + ADP. It participates in amino-acid biosynthesis; L-proline biosynthesis; L-glutamate 5-semialdehyde from L-glutamate: step 1/2. Catalyzes the transfer of a phosphate group to glutamate to form L-glutamate 5-phosphate. The protein is Glutamate 5-kinase of Enterococcus faecalis (strain ATCC 700802 / V583).